The primary structure comprises 219 residues: Chloramphenicol acetyltransferase (219 aa).

H190 (proton acceptor) is an active-site residue.

This sequence belongs to the chloramphenicol acetyltransferase family. Homotrimer.

It carries out the reaction chloramphenicol + acetyl-CoA = chloramphenicol 3-acetate + CoA. Functionally, this enzyme is an effector of chloramphenicol resistance in bacteria. This chain is Chloramphenicol acetyltransferase (catB), found in Clostridium butyricum.